The following is a 625-amino-acid chain: Chaperone protein HtpG (625 aa).

Residues 1–330 (MAKQVQNFNA…SSDLSLNVSR (330 aa)) are a; substrate-binding. Residues 331-545 (ELLQQDRQVT…SADPSAHMQK (215 aa)) form a b region. The interval 546 to 625 (LMAQMGKEYA…MVQAADSTKH (80 aa)) is c.

This sequence belongs to the heat shock protein 90 family. Homodimer.

It localises to the cytoplasm. Its function is as follows. Molecular chaperone. Has ATPase activity. This Bdellovibrio bacteriovorus (strain ATCC 15356 / DSM 50701 / NCIMB 9529 / HD100) protein is Chaperone protein HtpG.